The chain runs to 160 residues: Phosphopantetheine adenylyltransferase (160 aa).

Residue serine 11 participates in substrate binding. ATP-binding positions include 11–12 and histidine 19; that span reads SF. Positions 43, 75, and 89 each coordinate substrate. ATP contacts are provided by residues 90 to 92, glutamate 100, and 125 to 131; these read GLR and YSFISSS.

It belongs to the bacterial CoaD family. In terms of assembly, homohexamer. The cofactor is Mg(2+).

It is found in the cytoplasm. It carries out the reaction (R)-4'-phosphopantetheine + ATP + H(+) = 3'-dephospho-CoA + diphosphate. Its pathway is cofactor biosynthesis; coenzyme A biosynthesis; CoA from (R)-pantothenate: step 4/5. Functionally, reversibly transfers an adenylyl group from ATP to 4'-phosphopantetheine, yielding dephospho-CoA (dPCoA) and pyrophosphate. The chain is Phosphopantetheine adenylyltransferase from Staphylococcus aureus (strain Mu3 / ATCC 700698).